Reading from the N-terminus, the 196-residue chain is Ribonuclease S-F11 (196 aa).

Cysteine 16 and cysteine 21 are oxidised to a cystine. N-linked (GlcNAc...) asparagine glycosylation is present at asparagine 28. The Proton donor role is filled by histidine 32. Residues histidine 32 and 69–70 (QL) contribute to the RNA site. 3 disulfide bridges follow: cysteine 46/cysteine 94, cysteine 153/cysteine 186, and cysteine 169/cysteine 180. Residue glutamine 87 is part of the active site. 90–91 (KH) contributes to the RNA binding site. Catalysis depends on histidine 91, which acts as the Proton acceptor.

It belongs to the RNase T2 family. Monomer.

It is found in the secreted. The protein localises to the extracellular space. The enzyme catalyses a ribonucleotidyl-ribonucleotide-RNA + H2O = a 3'-end 3'-phospho-ribonucleotide-RNA + a 5'-end dephospho-ribonucleoside-RNA + H(+). Functionally, self-incompatibility (SI) is the inherited ability of a flowering plant to prevent self-fertilization by discriminating between self and non-self pollen during pollination. In many species of the Solanaceae, self-incompatibility is controlled by the single, multiallelic locus S. In Nicotiana alata (Winged tobacco), this protein is Ribonuclease S-F11.